The chain runs to 565 residues: Sulfite reductase [NADPH] hemoprotein beta-component (565 aa).

[4Fe-4S] cluster is bound by residues Cys-429, Cys-435, Cys-474, and Cys-478. Position 478 (Cys-478) interacts with siroheme.

Belongs to the nitrite and sulfite reductase 4Fe-4S domain family. Alpha(8)-beta(8). The alpha component is a flavoprotein, the beta component is a hemoprotein. Siroheme is required as a cofactor. Requires [4Fe-4S] cluster as cofactor.

It catalyses the reaction hydrogen sulfide + 3 NADP(+) + 3 H2O = sulfite + 3 NADPH + 4 H(+). It participates in sulfur metabolism; hydrogen sulfide biosynthesis; hydrogen sulfide from sulfite (NADPH route): step 1/1. Component of the sulfite reductase complex that catalyzes the 6-electron reduction of sulfite to sulfide. This is one of several activities required for the biosynthesis of L-cysteine from sulfate. The chain is Sulfite reductase [NADPH] hemoprotein beta-component from Shewanella baltica (strain OS223).